The primary structure comprises 323 residues: Beta-ketoacyl-[acyl-carrier-protein] synthase III (323 aa).

Catalysis depends on residues Cys-113 and His-250. Residues Gln-251–Arg-255 are ACP-binding. Asn-280 is a catalytic residue.

Belongs to the thiolase-like superfamily. FabH family. Homodimer.

It localises to the cytoplasm. It carries out the reaction malonyl-[ACP] + acetyl-CoA + H(+) = 3-oxobutanoyl-[ACP] + CO2 + CoA. Its pathway is lipid metabolism; fatty acid biosynthesis. Functionally, catalyzes the condensation reaction of fatty acid synthesis by the addition to an acyl acceptor of two carbons from malonyl-ACP. Catalyzes the first condensation reaction which initiates fatty acid synthesis and may therefore play a role in governing the total rate of fatty acid production. Possesses both acetoacetyl-ACP synthase and acetyl transacylase activities. Its substrate specificity determines the biosynthesis of branched-chain and/or straight-chain of fatty acids. This Agrobacterium fabrum (strain C58 / ATCC 33970) (Agrobacterium tumefaciens (strain C58)) protein is Beta-ketoacyl-[acyl-carrier-protein] synthase III.